Consider the following 3255-residue polypeptide: Genome polyprotein (3255 aa).

Residues 292 to 437 form the Peptidase S30 domain; that stretch reads VMNQQTLMAF…HSITHRMVQY (146 aa). Active-site for P1 proteinase activity residues include His345, Asp354, and Ser388. Positions 489 to 492 match the Involved in interaction with stylet and aphid transmission motif; the sequence is KITC. The short motif at 747–749 is the Involved in virions binding and aphid transmission element; it reads PTK. Positions 773–895 constitute a Peptidase C6 domain; the sequence is MFVTKDGYCY…ESEMQHYRVG (123 aa). Residues Cys781 and His854 each act as for helper component proteinase activity in the active site. The Helicase ATP-binding domain maps to 1397 to 1549; that stretch reads EIAHNEYRDI…PMHMVDIATE (153 aa). 1410-1417 serves as a coordination point for ATP; the sequence is GGVGSGKS. A DECH box motif is present at residues 1499-1502; sequence DECH. One can recognise a Helicase C-terminal domain in the interval 1568–1727; sequence DATKKGDNIL…GLPVMTSNVS (160 aa). A Nuclear localization signal motif is present at residues 2062-2069; that stretch reads EKGKKSGK. Tyr2084 bears the O-(5'-phospho-RNA)-tyrosine mark. A Peptidase C4 domain is found at 2215–2433; the sequence is SKTLFRGLRD…MVWGGINLIN (219 aa). Catalysis depends on for nuclear inclusion protein A activity residues His2260, Asp2295, and Cys2365. Positions 2699-2823 constitute a RdRp catalytic domain; the sequence is WVYCDADGSQ…AIKPEHESLL (125 aa). The segment at 2980–3028 is disordered; sequence AKLDAGQGSKTDDKQKNSADPKDNIITEKGSGSGQMKKDDDINAGLHGK. Basic and acidic residues predominate over residues 2989-3005; that stretch reads KTDDKQKNSADPKDNII. A Phosphothreonine modification is found at Thr3237.

The protein belongs to the potyviridae genome polyprotein family. As to quaternary structure, interacts with host eIF4E protein (via cap-binding region); this interaction mediates the translation of the VPg-viral RNA conjugates. Part of a complex that comprises VPg, RNA, host EIF4E and EIF4G; this interaction mediates the translation of the VPg-viral RNA conjugates. VPg is uridylylated by the polymerase and is covalently attached to the 5'-end of the genomic RNA. This uridylylated form acts as a nucleotide-peptide primer for the polymerase. In terms of processing, potyviral RNA is expressed as two polyproteins which undergo post-translational proteolytic processing. Genome polyprotein is processed by NIa-pro, P1 and HC-pro proteinases resulting in the production of at least ten individual proteins. P3N-PIPO polyprotein is cleaved by P1 and HC-pro proteinases resulting in the production of three individual proteins. The P1 proteinase and the HC-pro cleave only their respective C-termini autocatalytically. 6K1 is essential for proper proteolytic separation of P3 from CI.

The protein localises to the host cytoplasmic vesicle. The protein resides in the host nucleus. It localises to the virion. It catalyses the reaction RNA(n) + a ribonucleoside 5'-triphosphate = RNA(n+1) + diphosphate. The enzyme catalyses Hydrolyzes glutaminyl bonds, and activity is further restricted by preferences for the amino acids in P6 - P1' that vary with the species of potyvirus, e.g. Glu-Xaa-Xaa-Tyr-Xaa-Gln-|-(Ser or Gly) for the enzyme from tobacco etch virus. The natural substrate is the viral polyprotein, but other proteins and oligopeptides containing the appropriate consensus sequence are also cleaved.. It carries out the reaction Hydrolyzes a Gly-|-Gly bond at its own C-terminus, commonly in the sequence -Tyr-Xaa-Val-Gly-|-Gly, in the processing of the potyviral polyprotein.. Functionally, required for aphid transmission and also has proteolytic activity. Only cleaves a Gly-Gly dipeptide at its own C-terminus. Interacts with virions and aphid stylets. Acts as a suppressor of RNA-mediated gene silencing, also known as post-transcriptional gene silencing (PTGS), a mechanism of plant viral defense that limits the accumulation of viral RNAs. May have RNA-binding activity. In terms of biological role, has helicase activity. It may be involved in replication. Indispensable for virus replication. Reduces the abundance of host transcripts related to jasmonic acid biosynthesis therefore altering the host defenses. In order to increase its own stability, decreases host protein degradation pathways. Its function is as follows. Indispensable for virus replication. Functionally, mediates the cap-independent, EIF4E-dependent translation of viral genomic RNAs. Binds to the cap-binding site of host EIF4E and thus interferes with the host EIF4E-dependent mRNA export and translation. VPg-RNA directly binds EIF4E and is a template for transcription. Also forms trimeric complexes with EIF4E-EIF4G, which are templates for translation. In terms of biological role, has RNA-binding and proteolytic activities. An RNA-dependent RNA polymerase that plays an essential role in the virus replication. Its function is as follows. Involved in aphid transmission, cell-to-cell and systemis movement, encapsidation of the viral RNA and in the regulation of viral RNA amplification. This Lettuce mosaic virus (strain 0 / isolate French) (LMV) protein is Genome polyprotein.